Reading from the N-terminus, the 418-residue chain is MNLKEMGKNAKQAATILAQLSQQQKNTALQIIAEQLELQSNKILVENAKDIQLAKENGLSDAIIDRLLLTKERINSIANDVRHIISLPDPIGQIIDGGILESGTKLERVRVPLGVIGVIYEARPNVTVDVATLCLKTGNAVILRGGKETSYSNKILVTVIQDALEQTGLPKNAVQAITDPDRNFVLELLKLDKYVDMIIPRGGAGLHEFCKQNSTIPVIIGGVGVCHVFVEESAEQDKALAVIDNAKTQRPSTCNTLETLLVQESIATEFLPKLVAHLKHKNVKYHADPTALSILEKQNAEVSIVQEQQLRQEWGSLDLNVVIVKDIQQAIAHITEYGTQHSEAILTSSPRLAHQFVSLVDAAAVYVNASTRFTDGGQFGLGAEVAVSTQKLHARGPMGLEALTTYKWVCSGDYTVRQ.

It belongs to the gamma-glutamyl phosphate reductase family.

The protein resides in the cytoplasm. It catalyses the reaction L-glutamate 5-semialdehyde + phosphate + NADP(+) = L-glutamyl 5-phosphate + NADPH + H(+). The protein operates within amino-acid biosynthesis; L-proline biosynthesis; L-glutamate 5-semialdehyde from L-glutamate: step 2/2. In terms of biological role, catalyzes the NADPH-dependent reduction of L-glutamate 5-phosphate into L-glutamate 5-semialdehyde and phosphate. The product spontaneously undergoes cyclization to form 1-pyrroline-5-carboxylate. The chain is Gamma-glutamyl phosphate reductase from Histophilus somni (strain 129Pt) (Haemophilus somnus).